The primary structure comprises 1499 residues: Rap guanine nucleotide exchange factor 2 (1499 aa).

Disordered regions lie at residues H40 to L59 and S68 to L101. Over residues V83–I94 the composition is skewed to acidic residues. A135 to V254 lines the a nucleoside 3',5'-cyclic phosphate pocket. Residues K267 to K380 form the N-terminal Ras-GEF domain. Residues L385–F470 form the PDZ domain. S501 carries the post-translational modification Phosphoserine. In terms of domain architecture, Ras-associating spans P606 to E692. T644 carries the phosphothreonine; by PLK2 modification. The region spanning S717–L944 is the Ras-GEF domain. S806 carries the post-translational modification Phosphoserine; by PLK2. Residue S930 is modified to Phosphoserine. S933 carries the post-translational modification Phosphoserine; by PLK2. Residues P1002 to I1050 form a disordered region. Residue S1022 is modified to Phosphoserine. The span at Q1031 to P1040 shows a compositional bias: low complexity. Phosphoserine is present on residues S1080, S1089, S1095, S1116, S1120, and S1159. The tract at residues S1095 to F1160 is disordered. 2 stretches are compositionally biased toward low complexity: residues S1111–P1125 and S1141–F1160. S1176 carries the phosphoserine; by PLK2 modification. 2 disordered regions span residues P1224–S1256 and T1305–V1499. Composition is skewed to polar residues over residues G1247 to S1256 and Y1307 to G1331. A compositionally biased stretch (low complexity) spans E1355–T1366. The segment covering S1441–P1462 has biased composition (polar residues). A compositionally biased stretch (acidic residues) spans T1488–V1499.

This sequence belongs to the RAPGEF2 family. Interacts with CDH1, CTNNB1 and TJP1. Interacts (via C-terminal domain) with MAGI2 (via PDZ and WW domains); the interaction occurs before or after NGF stimulation. Interacts with KIDINS220 and NTRK1; the interactions occur after NGF stimulation. Found in a complex, at least composed of KIDINS220, MAGI2, NTRK1 and RAPGEF2; the complex is mainly formed at late endosomes in a neuronal growth factor (NGF)-dependent manner. Interacts (via C-terminal domain) with NEDD4 (via WW domains); this interaction leads to ubiquitination and degradation via the proteasome pathway in a cAMP-independent manner. Interacts with MAGI1 isoform 3 (via PDZ domain). Interacts with ADRB1 (via C-terminal PDZ motif); the interaction is direct. Interacts (via Ras-associating domain) with RAP1A (via GTP-bound active form). Interacts weakly with HRAS (via GDP- and GTP-bound forms). Interacts (via C-terminal domain) with MAGI2 (via PDZ and WW domains). Post-translationally, ubiquitinated by NEDD4, leading to proteasomal degradation. Phosphorylation by PLK2 promotes its activity. In terms of tissue distribution, expressed in primary neuronal and endocrine cells (at protein level). Highest expression levels in brain. Lower expression levels in heart, kidney, lung, placenta and blood leukocytes.

Its subcellular location is the cytoplasm. It is found in the perinuclear region. It localises to the cell membrane. The protein resides in the late endosome. The protein localises to the cell junction. Its function is as follows. Functions as a guanine nucleotide exchange factor (GEF), which activates Rap and Ras family of small GTPases by exchanging bound GDP for free GTP in a cAMP-dependent manner. Serves as a link between cell surface receptors and Rap/Ras GTPases in intracellular signaling cascades. Also acts as an effector for Rap1 by direct association with Rap1-GTP thereby leading to the amplification of Rap1-mediated signaling. Shows weak activity on HRAS. It is controversial whether RAPGEF2 binds cAMP and cGMP or not. Its binding to ligand-activated beta-1 adrenergic receptor ADRB1 leads to the Ras activation through the G(s)-alpha signaling pathway. Involved in the cAMP-induced Ras and Erk1/2 signaling pathway that leads to sustained inhibition of long term melanogenesis by reducing dendrite extension and melanin synthesis. Also provides inhibitory signals for cell proliferation of melanoma cells and promotes their apoptosis in a cAMP-independent nanner. Regulates cAMP-induced neuritogenesis by mediating the Rap1/B-Raf/ERK signaling through a pathway that is independent on both PKA and RAPGEF3/RAPGEF4. Involved in neuron migration and in the formation of the major forebrain fiber connections forming the corpus callosum, the anterior commissure and the hippocampal commissure during brain development. Involved in neuronal growth factor (NGF)-induced sustained activation of Rap1 at late endosomes and in brain-derived neurotrophic factor (BDNF)-induced axon outgrowth of hippocampal neurons. Plays a role in the regulation of embryonic blood vessel formation and in the establishment of basal junction integrity and endothelial barrier function. May be involved in the regulation of the vascular endothelial growth factor receptor KDR and cadherin CDH5 expression at allantois endothelial cell-cell junctions. In Homo sapiens (Human), this protein is Rap guanine nucleotide exchange factor 2 (RAPGEF2).